A 456-amino-acid chain; its full sequence is Putative alanyl-tRNA editing protein alaX (456 aa).

His-125, His-129, Cys-240, and His-244 together coordinate Zn(2+).

Belongs to the class-II aminoacyl-tRNA synthetase family. Alax-L subfamily. Requires Zn(2+) as cofactor.

May function in trans to edit the amino acid moiety from incorrectly charged tRNA(Ala). The chain is Putative alanyl-tRNA editing protein alaX from Saccharomyces cerevisiae (strain ATCC 204508 / S288c) (Baker's yeast).